Here is a 378-residue protein sequence, read N- to C-terminus: Stimulator of interferon genes protein (378 aa).

A run of 2 helical transmembrane segments spans residues 21-41 (AAFV…EPAD) and 46-66 (WLVL…LCSL). S-palmitoyl cysteine attachment occurs at residues cysteine 88 and cysteine 91. Transmembrane regions (helical) follow at residues 89–109 (LGCP…YTFL) and 114–134 (GLPF…NILL). Residues 153 to 339 (FNVAHGLAWS…KHLKQEEKEE (187 aa)) are cyclic dinucleotide-binding domain (CBD). 4 residues coordinate 2',3'-cGAMP: serine 162, tyrosine 167, arginine 238, and threonine 263. Residues serine 162, tyrosine 167, 238 to 241 (RVYT), and threonine 263 contribute to the 3',3'-c-di-GMP site. 2',3'-cUAMP contacts are provided by tyrosine 167, arginine 238, and threonine 263. The C-terminal tail (CTT) stretch occupies residues 339–378 (EVTVGTMGSSGVLESSTLDKEPQLLISGMDQPLPLRTDVF). Residue serine 354 is modified to Phosphoserine. The residue at position 355 (threonine 355) is a Phosphothreonine. The pLxIS motif signature appears at 362–365 (LLIS). Serine 365 bears the Phosphoserine; by TBK1 mark.

It belongs to the STING family. As to quaternary structure, homodimer; forms a homodimer in absence of cyclic nucleotide (c-di-GMP or cGAMP). Homotetramer; in presence of cyclic nucleotide (c-di-GMP or cGAMP), forms tetramers and higher-order oligomers through side-by-side packing. Interacts (when phosphorylated) with IRF3; following activation and phosphorylation on the pLxIS motif by TBK1, recruits IRF3. Interacts with TBK1; when homodimer, leading to subsequent production of IFN-beta. Phosphorylation by TBK1 leads to activation and production of IFN-beta. Following cyclic nucleotide (c-di-GMP or cGAMP)-binding, activation and translocation from the endoplasmic reticulum, STING1 is phosphorylated by TBK1 at Ser-365 in the pLxIS motif. The phosphorylated pLxIS motif constitutes an IRF3-binding motif, leading to recruitment of the transcription factor IRF3 to induce type-I interferons and other cytokines. In contrast, lacks phosphorylation site at position 357, leading to reduced production of type-I interferons and other cytokines.

The protein resides in the endoplasmic reticulum membrane. It localises to the cytoplasm. It is found in the perinuclear region. Its subcellular location is the endoplasmic reticulum-Golgi intermediate compartment membrane. The protein localises to the golgi apparatus membrane. The protein resides in the cytoplasmic vesicle. It localises to the autophagosome membrane. It is found in the mitochondrion outer membrane. Its subcellular location is the cell membrane. It catalyses the reaction H(+)(in) = H(+)(out). Functionally, facilitator of innate immune signaling that acts as a sensor of cytosolic DNA from bacteria and viruses and promotes low production of type I interferon (IFN-alpha and IFN-beta). Compared to other mammals, STING1-dependent type I interferon induction is strongly reduced in bats, suggesting that the cGAS-STING pathway promotes a limited inflammatory response. Innate immune response is triggered in response to non-CpG double-stranded DNA from viruses and bacteria delivered to the cytoplasm. Acts by binding cyclic dinucleotides: recognizes and binds cyclic di-GMP (c-di-GMP), a second messenger produced by bacteria, cyclic UMP-AMP (2',3'-cUAMP), and cyclic GMP-AMP (cGAMP), a messenger produced by CGAS in response to DNA virus in the cytosol. Upon binding to c-di-GMP, cUAMP or cGAMP, STING1 oligomerizes, translocates from the endoplasmic reticulum and is phosphorylated by TBK1 on the pLxIS motif, leading to recruitment and subsequent activation of the transcription factor IRF3 to induce expression of type I interferon and exert a potent anti-viral state. In addition to promote the production of type I interferons, plays a direct role in autophagy. Following cGAMP-binding, STING1 buds from the endoplasmic reticulum into COPII vesicles, which then form the endoplasmic reticulum-Golgi intermediate compartment (ERGIC). The ERGIC serves as the membrane source for WIPI2 recruitment and LC3 lipidation, leading to formation of autophagosomes that target cytosolic DNA or DNA viruses for degradation by the lysosome. Promotes autophagy by acting as a proton channel that directs proton efflux from the Golgi to facilitate MAP1LC3B/LC3B lipidation. The autophagy- and interferon-inducing activities can be uncoupled and autophagy induction is independent of TBK1 phosphorylation. The protein is Stimulator of interferon genes protein of Rhinolophus ferrumequinum (Greater horseshoe bat).